A 157-amino-acid chain; its full sequence is Small ribosomal subunit protein uS7 (157 aa).

It belongs to the universal ribosomal protein uS7 family. In terms of assembly, part of the 30S ribosomal subunit. Contacts proteins S9 and S11.

Its function is as follows. One of the primary rRNA binding proteins, it binds directly to 16S rRNA where it nucleates assembly of the head domain of the 30S subunit. Is located at the subunit interface close to the decoding center, probably blocks exit of the E-site tRNA. The polypeptide is Small ribosomal subunit protein uS7 (Francisella tularensis subsp. holarctica (strain OSU18)).